The chain runs to 923 residues: Probable dipeptidyl-aminopeptidase B (923 aa).

The span at 1–16 (MATEKGHGRDDEERVP) shows a compositional bias: basic and acidic residues. The interval 1–21 (MATEKGHGRDDEERVPLTRGS) is disordered. The Cytoplasmic segment spans residues 1-99 (MATEKGHGRD…KPMHKSVKIA (99 aa)). A helical; Signal-anchor for type II membrane protein membrane pass occupies residues 100–120 (LWTLLFLSLGGWSLAFVLFIF). Residues 121–923 (RSHDTYETPI…GLSYNFKHLH (803 aa)) are Vacuolar-facing. N-linked (GlcNAc...) asparagine glycosylation is found at N135, N351, and N574. The active-site Charge relay system is S756. N815 is a glycosylation site (N-linked (GlcNAc...) asparagine). Active-site charge relay system residues include D833 and H866. N902 is a glycosylation site (N-linked (GlcNAc...) asparagine).

This sequence belongs to the peptidase S9B family.

Its subcellular location is the vacuole membrane. The catalysed reaction is Release of an N-terminal dipeptide, Xaa-Yaa-|-Zaa-, from a polypeptide, preferentially when Yaa is Pro, provided Zaa is neither Pro nor hydroxyproline.. Its function is as follows. Type IV dipeptidyl-peptidase which removes N-terminal dipeptides sequentially from polypeptides having unsubstituted N-termini provided that the penultimate residue is proline. The polypeptide is Probable dipeptidyl-aminopeptidase B (DAPB) (Ajellomyces capsulatus (strain G186AR / H82 / ATCC MYA-2454 / RMSCC 2432) (Darling's disease fungus)).